We begin with the raw amino-acid sequence, 374 residues long: Anhydro-N-acetylmuramic acid kinase (374 aa).

15–22 (GTSADGID) contributes to the ATP binding site.

Belongs to the anhydro-N-acetylmuramic acid kinase family.

The catalysed reaction is 1,6-anhydro-N-acetyl-beta-muramate + ATP + H2O = N-acetyl-D-muramate 6-phosphate + ADP + H(+). The protein operates within amino-sugar metabolism; 1,6-anhydro-N-acetylmuramate degradation. Its pathway is cell wall biogenesis; peptidoglycan recycling. Its function is as follows. Catalyzes the specific phosphorylation of 1,6-anhydro-N-acetylmuramic acid (anhMurNAc) with the simultaneous cleavage of the 1,6-anhydro ring, generating MurNAc-6-P. Is required for the utilization of anhMurNAc either imported from the medium or derived from its own cell wall murein, and thus plays a role in cell wall recycling. The polypeptide is Anhydro-N-acetylmuramic acid kinase (Xanthomonas axonopodis pv. citri (strain 306)).